Reading from the N-terminus, the 80-residue chain is MAGGPRRGGRRRKKVCYFTANGITHIDYKDTELLKRFISERGKILPRRVTGTSAKYQRMLTTAIKRARHMALLPYVKDEN.

This sequence belongs to the bacterial ribosomal protein bS18 family. As to quaternary structure, part of the 30S ribosomal subunit. Forms a tight heterodimer with protein bS6.

Its function is as follows. Binds as a heterodimer with protein bS6 to the central domain of the 16S rRNA, where it helps stabilize the platform of the 30S subunit. The sequence is that of Small ribosomal subunit protein bS18 from Staphylococcus haemolyticus (strain JCSC1435).